We begin with the raw amino-acid sequence, 507 residues long: ATP synthase subunit alpha, chloroplastic (507 aa).

Position 170 to 177 (170 to 177 (GDRQTGKT)) interacts with ATP. Position 257 is a phosphothreonine (Thr257).

Belongs to the ATPase alpha/beta chains family. As to quaternary structure, F-type ATPases have 2 components, CF(1) - the catalytic core - and CF(0) - the membrane proton channel. CF(1) has five subunits: alpha(3), beta(3), gamma(1), delta(1), epsilon(1). CF(0) has four main subunits: a, b, b' and c.

The protein resides in the plastid. Its subcellular location is the chloroplast thylakoid membrane. The catalysed reaction is ATP + H2O + 4 H(+)(in) = ADP + phosphate + 5 H(+)(out). Its function is as follows. Produces ATP from ADP in the presence of a proton gradient across the membrane. The alpha chain is a regulatory subunit. The sequence is that of ATP synthase subunit alpha, chloroplastic from Capsella bursa-pastoris (Shepherd's purse).